A 228-amino-acid polypeptide reads, in one-letter code: Tol-Pal system protein TolQ (228 aa).

Helical transmembrane passes span 16–36 (IVVQLVIVILISFSIISWAII), 137–157 (VSPYIGLFGTVWGIMHAFMAL), and 172–192 (IAEALIATAIGLFAAIPAVMA).

It belongs to the ExbB/TolQ family. As to quaternary structure, the Tol-Pal system is composed of five core proteins: the inner membrane proteins TolA, TolQ and TolR, the periplasmic protein TolB and the outer membrane protein Pal. They form a network linking the inner and outer membranes and the peptidoglycan layer.

It localises to the cell inner membrane. Part of the Tol-Pal system, which plays a role in outer membrane invagination during cell division and is important for maintaining outer membrane integrity. The polypeptide is Tol-Pal system protein TolQ (Haemophilus influenzae (strain ATCC 51907 / DSM 11121 / KW20 / Rd)).